Consider the following 442-residue polypeptide: Divalent metal cation transporter MntH (442 aa).

A run of 11 helical transmembrane segments spans residues 29–49 (MLAY…PGNW), 62–82 (TLLT…SLCV), 106–126 (FCLW…ELLG), 135–155 (FVIP…VLLF), 166–186 (ALVI…ILFS), 209–229 (MLYI…LYLH), 258–278 (FALS…AATF), 295–315 (LLSP…ALLA), 347–367 (LITR…FGEN), 372–392 (LIVL…IPLV), and 413–433 (LAWL…LQSL).

It belongs to the NRAMP family.

Its subcellular location is the cell inner membrane. In terms of biological role, h(+)-stimulated, divalent metal cation uptake system. The chain is Divalent metal cation transporter MntH from Nostoc sp. (strain PCC 7120 / SAG 25.82 / UTEX 2576).